Consider the following 185-residue polypeptide: Regulatory protein RecX (185 aa).

It belongs to the RecX family.

It is found in the cytoplasm. Modulates RecA activity. The chain is Regulatory protein RecX from Thermobifida fusca (strain YX).